The primary structure comprises 605 residues: Capsid scaffolding protein (605 aa).

Active-site charge relay system residues include His-48, Ser-116, and His-139. The disordered stretch occupies residues 235 to 274 (ASDAPDLQKPDKALQSPPPASTDPATMLSGNAGEGATACG). Residues 281–300 (QDLISVPRNTFMTLLQTNLD) form an interaction with pAP region. Disordered stretches follow at residues 403-431 (DYVPAPSRSNKRKRDPEEDEEGGGLFPGE) and 489-588 (PHQS…KSVS). Positions 410-416 (RSNKRKR) match the Nuclear localization signal motif. The segment covering 568–579 (ASASGVAQSKEP) has biased composition (polar residues). The interval 585–605 (KSVSAHLKSIFCEELLNKRVA) is interaction with major capsid protein.

It belongs to the herpesviridae capsid scaffolding protein family. As to quaternary structure, homomultimer. Interacts with major capsid protein. In terms of assembly, exists in a monomer-dimer equilibrium with the dimer being the active species. Post-translationally, capsid scaffolding protein is cleaved by assemblin after formation of the spherical procapsid. As a result, the capsid obtains its mature, icosahedral shape. Cleavages occur at two or more sites: release (R-site) and maturation (M-site).

Its subcellular location is the host cytoplasm. The protein localises to the host nucleus. The catalysed reaction is Cleaves -Ala-|-Ser- and -Ala-|-Ala- bonds in the scaffold protein.. In terms of biological role, acts as a scaffold protein by binding major capsid protein in the cytoplasm, inducing the nuclear localization of both proteins. Multimerizes in the nucleus such as major capsid protein forms the icosahedral T=16 capsid. Autocatalytic cleavage releases the assembly protein, and subsequently abolishes interaction with major capsid protein. Cleavages products are evicted from the capsid before or during DNA packaging. Functionally, protease that plays an essential role in virion assembly within the nucleus. Catalyzes the cleavage of the assembly protein after formation of the spherical procapsid. By that cleavage, the capsid matures and gains its icosahedral shape. The cleavage sites seem to include -Ala-Ser-, -Ala-Ala-, as well as Ala-Thr bonds. Assemblin and cleavages products are evicted from the capsid before or during DNA packaging. Plays a major role in capsid assembly. Acts as a scaffold protein by binding major capsid protein. Multimerizes in the nucleus such as major capsid protein forms the icosahedral T=16 capsid. Cleaved by assemblin after capsid completion. The cleavages products are evicted from the capsid before or during DNA packaging. This Homo sapiens (Human) protein is Capsid scaffolding protein.